The chain runs to 156 residues: Small ribosomal subunit protein uS7 (156 aa).

The protein belongs to the universal ribosomal protein uS7 family. As to quaternary structure, part of the 30S ribosomal subunit. Contacts proteins S9 and S11.

One of the primary rRNA binding proteins, it binds directly to 16S rRNA where it nucleates assembly of the head domain of the 30S subunit. Is located at the subunit interface close to the decoding center, probably blocks exit of the E-site tRNA. The chain is Small ribosomal subunit protein uS7 from Shewanella amazonensis (strain ATCC BAA-1098 / SB2B).